The following is a 58-amino-acid chain: MSKTVVRKNESLDDALRRFKRAVTKAGTLQETRKREFYEKPSVKRKRKSEVARKRKKF.

The disordered stretch occupies residues 39–58; that stretch reads EKPSVKRKRKSEVARKRKKF. Positions 43–58 are enriched in basic residues; it reads VKRKRKSEVARKRKKF.

Belongs to the bacterial ribosomal protein bS21 family.

The chain is Small ribosomal subunit protein bS21 from Streptococcus pneumoniae (strain ATCC BAA-255 / R6).